Reading from the N-terminus, the 266-residue chain is 14-3-3 protein homolog (266 aa).

The interval 154-177 is disordered; it reads KQAADQAQESYQKATETAEGHSPA. Polar residues predominate over residues 158–168; the sequence is DQAQESYQKAT.

Belongs to the 14-3-3 family.

In Neospora caninum (Coccidian parasite), this protein is 14-3-3 protein homolog.